The chain runs to 226 residues: Probable peroxiredoxin prdx-3 (226 aa).

The region spanning 33 to 191 (LGPKNTVPAF…TLRVLKAFQF (159 aa)) is the Thioredoxin domain. Cys78 acts as the Cysteine sulfenic acid (-SOH) intermediate in catalysis.

Belongs to the peroxiredoxin family. AhpC/Prx1 subfamily. Homodimer; disulfide-linked, upon oxidation.

The enzyme catalyses a hydroperoxide + [thioredoxin]-dithiol = an alcohol + [thioredoxin]-disulfide + H2O. Thiol-specific peroxidase that catalyzes the reduction of hydrogen peroxide and organic hydroperoxides to water and alcohols, respectively. Plays a role in cell protection against oxidative stress by detoxifying peroxides and as sensor of hydrogen peroxide-mediated signaling events. This chain is Probable peroxiredoxin prdx-3 (prdx-3), found in Caenorhabditis elegans.